The following is a 309-amino-acid chain: DNA replication terminus site-binding protein (309 aa).

Belongs to the Tus family.

It is found in the cytoplasm. In terms of biological role, trans-acting protein required for termination of DNA replication. Binds to DNA replication terminator sequences (terA to terF) to prevent the passage of replication forks. The termination efficiency will be affected by the affinity of this protein for the terminator sequence. The protein is DNA replication terminus site-binding protein of Yersinia enterocolitica serotype O:8 / biotype 1B (strain NCTC 13174 / 8081).